The following is a 637-amino-acid chain: Phosphomethylpyrimidine synthase (637 aa).

Residues Asn-242, Met-271, Tyr-300, His-336, Ser-356 to Gly-358, Asp-397 to Arg-400, and Glu-436 contribute to the substrate site. Residue His-440 coordinates Zn(2+). Tyr-463 lines the substrate pocket. Zn(2+) is bound at residue His-504. [4Fe-4S] cluster is bound by residues Cys-584, Cys-587, and Cys-592.

Belongs to the ThiC family. As to quaternary structure, homodimer. [4Fe-4S] cluster is required as a cofactor.

It carries out the reaction 5-amino-1-(5-phospho-beta-D-ribosyl)imidazole + S-adenosyl-L-methionine = 4-amino-2-methyl-5-(phosphooxymethyl)pyrimidine + CO + 5'-deoxyadenosine + formate + L-methionine + 3 H(+). It participates in cofactor biosynthesis; thiamine diphosphate biosynthesis. In terms of biological role, catalyzes the synthesis of the hydroxymethylpyrimidine phosphate (HMP-P) moiety of thiamine from aminoimidazole ribotide (AIR) in a radical S-adenosyl-L-methionine (SAM)-dependent reaction. This chain is Phosphomethylpyrimidine synthase, found in Janthinobacterium sp. (strain Marseille) (Minibacterium massiliensis).